Reading from the N-terminus, the 98-residue chain is Lipolysis-activating peptide 1-beta chain (98 aa).

The first 22 residues, 1–22 (MANVQVIFVAYIAVIAFSMVYG), serve as a signal peptide directing secretion. The region spanning 23-91 (DDYKPFGEHN…FLKAMEKQCP (69 aa)) is the LCN-type CS-alpha/beta domain. 3 cysteine pairs are disulfide-bonded: cysteine 37–cysteine 60, cysteine 45–cysteine 70, and cysteine 49–cysteine 72.

This sequence belongs to the long (3 C-C) scorpion toxin superfamily. Homodimer; disulfide-linked or monomer (edited version) or heterodimer of an alpha chain (AC B8XH01) and this beta chain (non-edited version). In terms of tissue distribution, expressed by the venom gland.

Its subcellular location is the secreted. Functionally, the homodimer inhibits HMG-CoA reductase (HMGCR) (32% of inhibition produced by 0.6 uM), a glycoprotein involved in the control of cholesterol biosynthesis. The inhibitory effects of bumarsin are seen at much lower concentrations (0.6 uM) than that for statins such as atorvastatin (5 mM) and simvastatin (10 uM). In addition to inhibition of HMG-CoA reductase, this protein lowers cholesterol levels by inducing steroid hormone synthesis via StAR, and by increasing reverse cholesterol transport mediated by the induction of ABCA1 and APOA1. In terms of biological role, the heterodimer non-edited LVP1 induces lipolysis in rat adipocytes. Induction of lipolysis by LVP1 appears to be mediated through the beta-2 adrenergic receptor pathway (ADRB2). Its function is as follows. The monomer edited version, similar to alpha-toxins, may modulate voltage-gated sodium channels (Nav) and may block voltage-gated potassium channels (Kv). This Buthus israelis (Israeli scorpion) protein is Lipolysis-activating peptide 1-beta chain.